Reading from the N-terminus, the 391-residue chain is Alkanesulfonate monooxygenase (391 aa).

It belongs to the SsuD family.

The catalysed reaction is an alkanesulfonate + FMNH2 + O2 = an aldehyde + FMN + sulfite + H2O + 2 H(+). Functionally, catalyzes the desulfonation of aliphatic sulfonates. This Rhodopseudomonas palustris (strain ATCC BAA-98 / CGA009) protein is Alkanesulfonate monooxygenase.